A 54-amino-acid polypeptide reads, in one-letter code: Large ribosomal subunit protein bL33A (54 aa).

This sequence belongs to the bacterial ribosomal protein bL33 family.

The sequence is that of Large ribosomal subunit protein bL33A from Myxococcus xanthus (strain DK1622).